We begin with the raw amino-acid sequence, 144 residues long: Large ribosomal subunit protein uL11 (144 aa).

This sequence belongs to the universal ribosomal protein uL11 family. In terms of assembly, part of the ribosomal stalk of the 50S ribosomal subunit. Interacts with L10 and the large rRNA to form the base of the stalk. L10 forms an elongated spine to which L12 dimers bind in a sequential fashion forming a multimeric L10(L12)X complex. In terms of processing, one or more lysine residues are methylated.

Its function is as follows. Forms part of the ribosomal stalk which helps the ribosome interact with GTP-bound translation factors. The sequence is that of Large ribosomal subunit protein uL11 from Saccharopolyspora erythraea (strain ATCC 11635 / DSM 40517 / JCM 4748 / NBRC 13426 / NCIMB 8594 / NRRL 2338).